We begin with the raw amino-acid sequence, 3970 residues long: Polyketide synthase-nonribosomal peptide synthetase hybrid himA (3970 aa).

In terms of domain architecture, Ketosynthase family 3 (KS3) spans 8-443 (SEPIAIIGSA…GTNSHAILES (436 aa)). Residues cysteine 181, histidine 320, and histidine 363 each act as for beta-ketoacyl synthase activity in the active site. Residues 561–876 (IFTGQGAQWP…PYAGLLHRGR (316 aa)) are malonyl-CoA:ACP transacylase (MAT) domain. The segment at 949–1083 (HELLGVRTSD…GMVHLHLGEP (135 aa)) is N-terminal hotdog fold. Residues 949–1253 (HELLGVRTSD…GLTVVALSST (305 aa)) form a dehydratase (DH) domain region. The PKS/mFAS DH domain maps to 949-1256 (HELLGVRTSD…VVALSSTGPA (308 aa)). The Proton acceptor; for dehydratase activity role is filled by histidine 981. Residues 1098–1256 (GLNRVDLDEF…VVALSSTGPA (159 aa)) are C-terminal hotdog fold. Aspartate 1158 functions as the Proton donor; for dehydratase activity in the catalytic mechanism. The segment at 2060–2234 (TYVMIGLTGE…ASVLDIGMVS (175 aa)) is ketoreductase (KR) domain. A Carrier 1 domain is found at 2342-2419 (AIAAILTESF…TLAEEVAKEL (78 aa)). An O-(pantetheine 4'-phosphoryl)serine modification is found at serine 2379. Residues 2420–2482 (FEDRSTSAPP…NDDSDPTAQC (63 aa)) are disordered. A compositionally biased stretch (low complexity) spans 2445–2466 (GSSTDPSSNSDSKSGFDGFSSD). Residues 2467–2477 (DSSDIANDDSD) show a composition bias toward acidic residues. The segment at 2487 to 2919 (PMSLSQARMW…ATTPTERVAT (433 aa)) is condensation (C) domain. Residues 2974-3381 (SYKAMSDRVN…LGDIANAILK (408 aa)) form an adenylation (A) domain region. Residues 3466 to 3495 (RPLPASGDEDGDEDTETETGADADADAGAD) form a disordered region. Residues 3472 to 3492 (GDEDGDEDTETETGADADADA) show a composition bias toward acidic residues. Residues 3496–3574 (TTLSDIHSKL…AIAERILRGV (79 aa)) form the Carrier 2 domain. Serine 3534 is modified (O-(pantetheine 4'-phosphoryl)serine). Residues 3633–3866 (LTGATGFLGR…FIRVETVAEE (234 aa)) form a reductase (R) domain region.

The protein in the C-terminal section; belongs to the NRP synthetase family.

Its pathway is secondary metabolite biosynthesis. Polyketide synthase-nonribosomal peptide synthetase hybrid; part of the him gene cluster that mediates the biosynthesis of himeic acid A, a ubiquitin-activating enzyme (E1) inhibitor. First, himA, together with the trans-enoyl reductase himH, catalyzes the formation of apolyketide chain, which is then condensed with leucine by the NRPS activity of himA. Dieckmann cyclization and release from himA gives a tetramic acid intermediate as the product of himA PKS-NRPS. HimG then catalyzes alpha-oxidation of the tetramic acid ring, with a subsequent rearrangement to yield apyrone intermediate. Two terminal methyl groups of polyketide and amide side chains are oxidized to carboxylic acids by himC cytochrome P450 monooxygenase to form himeic acid A. Himeic acid A is further converted to himeic acids B and C during culture growth. No gene responsible for pyrone to pyridone conversion was found in the him gene cluster and himeic acid A is non-enzymatically converted to himeic acid C by the incorporation of an ammonium nitrogen atom in a pH5 buffer, and to himeic acid B at a conversion ratio of 50% during incubation in MeOH for 5 days. This Aspergillus japonicus protein is Polyketide synthase-nonribosomal peptide synthetase hybrid himA.